The primary structure comprises 75 residues: DNA-directed RNA polymerase subunit omega (75 aa).

Belongs to the RNA polymerase subunit omega family. In terms of assembly, in cyanobacteria the RNAP catalytic core is composed of 2 alpha, 1 beta, 1 beta', 1 gamma and 1 omega subunit. When a sigma factor is associated with the core the holoenzyme is formed, which can initiate transcription.

The catalysed reaction is RNA(n) + a ribonucleoside 5'-triphosphate = RNA(n+1) + diphosphate. Promotes RNA polymerase assembly. Latches the N- and C-terminal regions of the beta' subunit thereby facilitating its interaction with the beta and alpha subunits. This chain is DNA-directed RNA polymerase subunit omega, found in Synechococcus sp. (strain CC9311).